The sequence spans 173 residues: 16S rRNA aminocarboxypropyltransferase (173 aa).

Positions 25, 72, 96, and 115 each coordinate S-adenosyl-L-methionine.

It belongs to the TDD superfamily. TSR3 family.

The protein localises to the cytoplasm. It catalyses the reaction an N(1)-methylpseudouridine in rRNA + S-adenosyl-L-methionine = N(1)-methyl-N(3)-[(3S)-3-amino-3-carboxypropyl]pseudouridine in rRNA + S-methyl-5'-thioadenosine + H(+). Aminocarboxypropyltransferase that catalyzes the aminocarboxypropyl transfer on pseudouridine corresponding to position 914 in M.jannaschii 16S rRNA. It constitutes the last step in biosynthesis of the hypermodified N1-methyl-N3-(3-amino-3-carboxypropyl) pseudouridine (m1acp3-Psi). The chain is 16S rRNA aminocarboxypropyltransferase from Methanosarcina mazei (strain ATCC BAA-159 / DSM 3647 / Goe1 / Go1 / JCM 11833 / OCM 88) (Methanosarcina frisia).